The chain runs to 475 residues: Aspartyl/glutamyl-tRNA(Asn/Gln) amidotransferase subunit B (475 aa).

It belongs to the GatB/GatE family. GatB subfamily. Heterotrimer of A, B and C subunits.

It carries out the reaction L-glutamyl-tRNA(Gln) + L-glutamine + ATP + H2O = L-glutaminyl-tRNA(Gln) + L-glutamate + ADP + phosphate + H(+). The catalysed reaction is L-aspartyl-tRNA(Asn) + L-glutamine + ATP + H2O = L-asparaginyl-tRNA(Asn) + L-glutamate + ADP + phosphate + 2 H(+). In terms of biological role, allows the formation of correctly charged Asn-tRNA(Asn) or Gln-tRNA(Gln) through the transamidation of misacylated Asp-tRNA(Asn) or Glu-tRNA(Gln) in organisms which lack either or both of asparaginyl-tRNA or glutaminyl-tRNA synthetases. The reaction takes place in the presence of glutamine and ATP through an activated phospho-Asp-tRNA(Asn) or phospho-Glu-tRNA(Gln). In Staphylococcus haemolyticus (strain JCSC1435), this protein is Aspartyl/glutamyl-tRNA(Asn/Gln) amidotransferase subunit B.